Reading from the N-terminus, the 463-residue chain is Glycine--tRNA ligase (463 aa).

Residues arginine 102 and glutamate 165 each coordinate substrate. ATP-binding positions include 197–199 (RNE), 207–212 (FRTREF), 284–285 (EL), and 328–331 (GLTR). Position 212–216 (212–216 (FEQME)) interacts with substrate. Residue 324–328 (EPAAG) participates in substrate binding.

Belongs to the class-II aminoacyl-tRNA synthetase family. As to quaternary structure, homodimer.

It is found in the cytoplasm. The enzyme catalyses tRNA(Gly) + glycine + ATP = glycyl-tRNA(Gly) + AMP + diphosphate. Its function is as follows. Catalyzes the attachment of glycine to tRNA(Gly). The protein is Glycine--tRNA ligase of Mycobacterium bovis (strain ATCC BAA-935 / AF2122/97).